The chain runs to 208 residues: Uracil phosphoribosyltransferase (208 aa).

Residues arginine 78, arginine 103, and 130–138 (DPMLATGGS) contribute to the 5-phospho-alpha-D-ribose 1-diphosphate site. Uracil-binding positions include isoleucine 193 and 198 to 200 (GDA). Aspartate 199 contacts 5-phospho-alpha-D-ribose 1-diphosphate.

The protein belongs to the UPRTase family. The cofactor is Mg(2+).

It carries out the reaction UMP + diphosphate = 5-phospho-alpha-D-ribose 1-diphosphate + uracil. It functions in the pathway pyrimidine metabolism; UMP biosynthesis via salvage pathway; UMP from uracil: step 1/1. Allosterically activated by GTP. Catalyzes the conversion of uracil and 5-phospho-alpha-D-ribose 1-diphosphate (PRPP) to UMP and diphosphate. This chain is Uracil phosphoribosyltransferase, found in Enterobacter sp. (strain 638).